Reading from the N-terminus, the 341-residue chain is S-adenosylmethionine:tRNA ribosyltransferase-isomerase (341 aa).

It belongs to the QueA family. As to quaternary structure, monomer.

Its subcellular location is the cytoplasm. It catalyses the reaction 7-aminomethyl-7-carbaguanosine(34) in tRNA + S-adenosyl-L-methionine = epoxyqueuosine(34) in tRNA + adenine + L-methionine + 2 H(+). It functions in the pathway tRNA modification; tRNA-queuosine biosynthesis. In terms of biological role, transfers and isomerizes the ribose moiety from AdoMet to the 7-aminomethyl group of 7-deazaguanine (preQ1-tRNA) to give epoxyqueuosine (oQ-tRNA). The sequence is that of S-adenosylmethionine:tRNA ribosyltransferase-isomerase from Clostridium botulinum (strain Loch Maree / Type A3).